The chain runs to 536 residues: Arylsulfatase (536 aa).

Asp-13, Asp-14, and Cys-51 together coordinate Ca(2+). Catalysis depends on Cys-51, which acts as the Nucleophile. At Cys-51 the chain carries 3-oxoalanine (Cys). Residue His-115 is part of the active site. Asp-317 and Asn-318 together coordinate Ca(2+).

It belongs to the sulfatase family. Monomer. Requires Ca(2+) as cofactor. In terms of processing, the conversion to 3-oxoalanine (also known as C-formylglycine, FGly), of a serine or cysteine residue in prokaryotes and of a cysteine residue in eukaryotes, is critical for catalytic activity.

It is found in the cytoplasm. The catalysed reaction is an aryl sulfate + H2O = a phenol + sulfate + H(+). In terms of biological role, hydrolyzes the bond between sulfate and the aromatic ring in a compound such as 4-nitrocatechol sulfate. The sequence is that of Arylsulfatase (atsA) from Pseudomonas aeruginosa (strain ATCC 15692 / DSM 22644 / CIP 104116 / JCM 14847 / LMG 12228 / 1C / PRS 101 / PAO1).